A 1761-amino-acid chain; its full sequence is Probable serine/threonine-protein kinase DDB_G0282963 (1761 aa).

Disordered regions lie at residues P18–Q47, Q60–L269, S322–N458, Q545–Q717, L749–Q783, A798–A830, T842–F956, N972–T997, I1081–N1151, K1179–Q1305, A1318–T1343, and Q1355–K1459. 4 stretches are compositionally biased toward low complexity: residues Q19–Q47, Q60–I85, N92–L105, and A112–N237. Residues K238–Q256 are compositionally biased toward polar residues. Composition is skewed to low complexity over residues S257–L269, S322–T341, G348–V451, and N546–I572. Residues M573–Y582 show a composition bias toward polar residues. Over residues N591–S627 the composition is skewed to low complexity. Over residues S633–D643 the composition is skewed to acidic residues. Composition is skewed to low complexity over residues N674–T697, P759–N778, N805–N824, T847–Y885, T902–F956, S979–N990, I1081–N1149, and N1180–N1262. A compositionally biased stretch (basic residues) spans N1263–N1273. 4 stretches are compositionally biased toward low complexity: residues S1288–S1303, D1320–N1338, N1359–N1386, and S1393–N1454. Positions L1476–I1744 constitute a Protein kinase domain. Residues I1482–V1490 and K1503 contribute to the ATP site. D1597 acts as the Proton acceptor in catalysis.

Belongs to the protein kinase superfamily. TKL Ser/Thr protein kinase family.

It catalyses the reaction L-seryl-[protein] + ATP = O-phospho-L-seryl-[protein] + ADP + H(+). The catalysed reaction is L-threonyl-[protein] + ATP = O-phospho-L-threonyl-[protein] + ADP + H(+). The polypeptide is Probable serine/threonine-protein kinase DDB_G0282963 (Dictyostelium discoideum (Social amoeba)).